The sequence spans 337 residues: F420-dependent glucose-6-phosphate dehydrogenase (337 aa).

Coenzyme F420-(gamma-Glu)n is bound at residue Asp40. His41 functions as the Proton donor in the catalytic mechanism. Residues Thr77 and 108-109 (SG) contribute to the coenzyme F420-(gamma-Glu)n site. The active-site Proton acceptor is the Glu110. Residues Asn113, 178 to 179 (GG), and 181 to 182 (VV) contribute to the coenzyme F420-(gamma-Glu)n site. Residues Thr196, Lys199, Lys260, and Arg284 each contribute to the substrate site.

The protein belongs to the F420-dependent glucose-6-phosphate dehydrogenase family. As to quaternary structure, homodimer.

The enzyme catalyses oxidized coenzyme F420-(gamma-L-Glu)(n) + D-glucose 6-phosphate + H(+) = 6-phospho-D-glucono-1,5-lactone + reduced coenzyme F420-(gamma-L-Glu)(n). Functionally, catalyzes the coenzyme F420-dependent oxidation of glucose 6-phosphate (G6P) to 6-phosphogluconolactone. The protein is F420-dependent glucose-6-phosphate dehydrogenase of Rhodococcus erythropolis (strain PR4 / NBRC 100887).